The sequence spans 479 residues: Membrane-bound lytic murein transglycosylase F (479 aa).

Positions 1 to 18 are cleaved as a signal peptide; sequence MKGLFIRIVLAICLSLWA. The tract at residues 19–266 is non-LT domain; that stretch reads IDMVFPWQQI…RIEEKYFNHL (248 aa). Residues 267-479 form an LT domain region; that stretch reads NQFDYVDTRS…ISTQTQQEQR (213 aa). Glu311 is a catalytic residue.

It in the N-terminal section; belongs to the bacterial solute-binding protein 3 family. The protein in the C-terminal section; belongs to the transglycosylase Slt family.

Its subcellular location is the cell outer membrane. It carries out the reaction Exolytic cleavage of the (1-&gt;4)-beta-glycosidic linkage between N-acetylmuramic acid (MurNAc) and N-acetylglucosamine (GlcNAc) residues in peptidoglycan, from either the reducing or the non-reducing ends of the peptidoglycan chains, with concomitant formation of a 1,6-anhydrobond in the MurNAc residue.. Murein-degrading enzyme that degrades murein glycan strands and insoluble, high-molecular weight murein sacculi, with the concomitant formation of a 1,6-anhydromuramoyl product. Lytic transglycosylases (LTs) play an integral role in the metabolism of the peptidoglycan (PG) sacculus. Their lytic action creates space within the PG sacculus to allow for its expansion as well as for the insertion of various structures such as secretion systems and flagella. This chain is Membrane-bound lytic murein transglycosylase F, found in Histophilus somni (strain 2336) (Haemophilus somnus).